Here is a 309-residue protein sequence, read N- to C-terminus: Homoserine O-acetyltransferase (309 aa).

Cys-142 acts as the Acyl-thioester intermediate in catalysis. Substrate is bound by residues Lys-163 and Ser-192. His-235 serves as the catalytic Proton acceptor. The active site involves Glu-237. Arg-249 lines the substrate pocket.

This sequence belongs to the MetA family.

The protein localises to the cytoplasm. It carries out the reaction L-homoserine + acetyl-CoA = O-acetyl-L-homoserine + CoA. It participates in amino-acid biosynthesis; L-methionine biosynthesis via de novo pathway; O-acetyl-L-homoserine from L-homoserine: step 1/1. In terms of biological role, transfers an acetyl group from acetyl-CoA to L-homoserine, forming acetyl-L-homoserine. The sequence is that of Homoserine O-acetyltransferase from Allorhizobium ampelinum (strain ATCC BAA-846 / DSM 112012 / S4) (Agrobacterium vitis (strain S4)).